Here is a 218-residue protein sequence, read N- to C-terminus: Adenylate kinase (218 aa).

10-15 (GAGKGT) provides a ligand contact to ATP. The interval 30–59 (STGDMLRNAAKEGKPLGLEAKKIMDAGQLV) is NMP. AMP-binding positions include Thr-31, Arg-36, 57-59 (QLV), 85-88 (GFPR), and Gln-92. The segment at 122-159 (GRRVHLASGRSYHVMFNPPKQEGLDDATGEPLVQRADD) is LID. ATP contacts are provided by residues Arg-123 and 132–133 (SY). AMP-binding residues include Arg-156 and Arg-167. Gly-203 lines the ATP pocket.

The protein belongs to the adenylate kinase family. In terms of assembly, monomer.

The protein resides in the cytoplasm. It catalyses the reaction AMP + ATP = 2 ADP. Its pathway is purine metabolism; AMP biosynthesis via salvage pathway; AMP from ADP: step 1/1. In terms of biological role, catalyzes the reversible transfer of the terminal phosphate group between ATP and AMP. Plays an important role in cellular energy homeostasis and in adenine nucleotide metabolism. In Chlorobium chlorochromatii (strain CaD3), this protein is Adenylate kinase.